The primary structure comprises 340 residues: Ketol-acid reductoisomerase (NADP(+)) (340 aa).

One can recognise a KARI N-terminal Rossmann domain in the interval 1–182 (MRVYYDRDCD…GGGRSGIIET (182 aa)). NADP(+)-binding positions include 24-27 (YGSQ), arginine 48, serine 51, serine 53, and 83-86 (DELQ). Residue histidine 108 is part of the active site. Glycine 134 contacts NADP(+). Residues 183–329 (NFRQECETDL…EKLRGMMPWI (147 aa)) form the KARI C-terminal knotted domain. Residues aspartate 191, glutamate 195, glutamate 227, and glutamate 231 each coordinate Mg(2+). Serine 252 serves as a coordination point for substrate.

The protein belongs to the ketol-acid reductoisomerase family. Mg(2+) is required as a cofactor.

The catalysed reaction is (2R)-2,3-dihydroxy-3-methylbutanoate + NADP(+) = (2S)-2-acetolactate + NADPH + H(+). The enzyme catalyses (2R,3R)-2,3-dihydroxy-3-methylpentanoate + NADP(+) = (S)-2-ethyl-2-hydroxy-3-oxobutanoate + NADPH + H(+). It functions in the pathway amino-acid biosynthesis; L-isoleucine biosynthesis; L-isoleucine from 2-oxobutanoate: step 2/4. It participates in amino-acid biosynthesis; L-valine biosynthesis; L-valine from pyruvate: step 2/4. In terms of biological role, involved in the biosynthesis of branched-chain amino acids (BCAA). Catalyzes an alkyl-migration followed by a ketol-acid reduction of (S)-2-acetolactate (S2AL) to yield (R)-2,3-dihydroxy-isovalerate. In the isomerase reaction, S2AL is rearranged via a Mg-dependent methyl migration to produce 3-hydroxy-3-methyl-2-ketobutyrate (HMKB). In the reductase reaction, this 2-ketoacid undergoes a metal-dependent reduction by NADPH to yield (R)-2,3-dihydroxy-isovalerate. This chain is Ketol-acid reductoisomerase (NADP(+)), found in Paracoccus denitrificans (strain Pd 1222).